The sequence spans 389 residues: MDSLCLRAAPASALASGPAFEALLDGVRDRARLGEFDRQRHISRDVIDAFKAHGVYRALVPKRFGGLECSPAAFCEMIERISHADGSAGWVASFGMSPVYLAALPLETIAEIYGNSPDTVFAGGIFPPQAAEIVSGGFKINGRWKYSSGSMGADIVGVGIAPRNGDKLDLPRLAVLPRSQARIEETWDTVGLLGTGSHDLVVEDVVVGEQWTFVRGGKPNLDEPFFRYPSLSFATQVLSVVGLGIARAALDELSGMASGRISVTGAPALADRPLAQVDVAKAEAALRSARAFFYESIERAWEHVLAGDPVPVDVTNLLRLSSTHAARVAAEVARSAQMLSGMTGIYNESPLARCVNDAQVVTQHAFMGDVTYQNAGAMFFGKQPLPGYL.

The protein belongs to the HpaH/HsaA monooxygenase family.

The catalysed reaction is (indol-3-yl)acetate + NADH + O2 + H(+) = 2-hydroxy-(1H-indol-3-yl)acetate + NAD(+) + H2O. The enzyme catalyses indole + NADH + O2 + H(+) = indoxyl + NAD(+) + H2O. Its function is as follows. Involved in the degradation of the plant hormone indole-3-acetic acid (IAA). Catalyzes the first step of the pathway, the conversion of IAA to 2-hydroxy-IAA (2-OH-IAA). Can also convert indole to indoxyl, which spontaneously dimerizes in the presence of oxygen to form the blue pigment indigo. The sequence is that of Indole-3-acetate monooxygenase from Pseudomonas putida (Arthrobacter siderocapsulatus).